Here is a 141-residue protein sequence, read N- to C-terminus: Nucleoside diphosphate kinase (141 aa).

Positions 11, 59, 87, 93, 104, and 114 each coordinate ATP. Histidine 117 serves as the catalytic Pros-phosphohistidine intermediate.

Belongs to the NDK family. Homotetramer. It depends on Mg(2+) as a cofactor.

It is found in the cytoplasm. The enzyme catalyses a 2'-deoxyribonucleoside 5'-diphosphate + ATP = a 2'-deoxyribonucleoside 5'-triphosphate + ADP. It carries out the reaction a ribonucleoside 5'-diphosphate + ATP = a ribonucleoside 5'-triphosphate + ADP. Its function is as follows. Major role in the synthesis of nucleoside triphosphates other than ATP. The ATP gamma phosphate is transferred to the NDP beta phosphate via a ping-pong mechanism, using a phosphorylated active-site intermediate. The protein is Nucleoside diphosphate kinase of Serratia proteamaculans (strain 568).